The sequence spans 444 residues: Tubulin beta-4A chain (444 aa).

Positions 1-4 match the MREI motif motif; the sequence is MREI. GTP is bound by residues Gln11, Glu69, Ser138, Gly142, Thr143, and Gly144. Glu69 serves as a coordination point for Mg(2+). Ser172 bears the Phosphoserine; by CDK1 mark. Residues Asn204 and Asn226 each coordinate GTP. 5-glutamyl polyglutamate is present on Glu436.

The protein belongs to the tubulin family. In terms of assembly, dimer of alpha and beta chains. A typical microtubule is a hollow water-filled tube with an outer diameter of 25 nm and an inner diameter of 15 nM. Alpha-beta heterodimers associate head-to-tail to form protofilaments running lengthwise along the microtubule wall with the beta-tubulin subunit facing the microtubule plus end conferring a structural polarity. Microtubules usually have 13 protofilaments but different protofilament numbers can be found in some organisms and specialized cells. The cofactor is Mg(2+). Some glutamate residues at the C-terminus are polyglycylated, resulting in polyglycine chains on the gamma-carboxyl group. Glycylation is mainly limited to tubulin incorporated into axonemes (cilia and flagella) whereas glutamylation is prevalent in neuronal cells, centrioles, axonemes, and the mitotic spindle. Both modifications can coexist on the same protein on adjacent residues, and lowering polyglycylation levels increases polyglutamylation, and reciprocally. Cilia and flagella glycylation is required for their stability and maintenance. Flagella glycylation controls sperm motility. In terms of processing, some glutamate residues at the C-terminus are polyglutamylated, resulting in polyglutamate chains on the gamma-carboxyl group. Polyglutamylation plays a key role in microtubule severing by spastin (SPAST). SPAST preferentially recognizes and acts on microtubules decorated with short polyglutamate tails: severing activity by SPAST increases as the number of glutamates per tubulin rises from one to eight, but decreases beyond this glutamylation threshold. Glutamylation is also involved in cilia motility. Post-translationally, phosphorylated on Ser-172 by CDK1 during the cell cycle, from metaphase to telophase, but not in interphase. This phosphorylation inhibits tubulin incorporation into microtubules.

The protein localises to the cytoplasm. It localises to the cytoskeleton. Its function is as follows. Tubulin is the major constituent of microtubules, a cylinder consisting of laterally associated linear protofilaments composed of alpha- and beta-tubulin heterodimers. Microtubules grow by the addition of GTP-tubulin dimers to the microtubule end, where a stabilizing cap forms. Below the cap, tubulin dimers are in GDP-bound state, owing to GTPase activity of alpha-tubulin. This is Tubulin beta-4A chain (TUBB4A) from Bos taurus (Bovine).